A 143-amino-acid polypeptide reads, in one-letter code: Large ribosomal subunit protein uL13 (143 aa).

The protein belongs to the universal ribosomal protein uL13 family. Part of the 50S ribosomal subunit.

Functionally, this protein is one of the early assembly proteins of the 50S ribosomal subunit, although it is not seen to bind rRNA by itself. It is important during the early stages of 50S assembly. This chain is Large ribosomal subunit protein uL13, found in Prochlorococcus marinus subsp. pastoris (strain CCMP1986 / NIES-2087 / MED4).